Consider the following 517-residue polypeptide: Crotonobetaine/carnitine--CoA ligase (517 aa).

Belongs to the ATP-dependent AMP-binding enzyme family.

The enzyme catalyses 4-(trimethylamino)butanoate + ATP + CoA = 4-(trimethylamino)butanoyl-CoA + AMP + diphosphate. It carries out the reaction crotonobetaine + ATP + CoA = crotonobetainyl-CoA + AMP + diphosphate. The catalysed reaction is (R)-carnitine + ATP + CoA = (R)-carnitinyl-CoA + AMP + diphosphate. It participates in amine and polyamine metabolism; carnitine metabolism. Functionally, catalyzes the transfer of CoA to carnitine, generating the initial carnitinyl-CoA needed for the CaiB reaction cycle. Also has activity toward crotonobetaine and gamma-butyrobetaine. This Salmonella paratyphi A (strain ATCC 9150 / SARB42) protein is Crotonobetaine/carnitine--CoA ligase.